A 607-amino-acid polypeptide reads, in one-letter code: UvrABC system protein C (607 aa).

One can recognise a GIY-YIG domain in the interval 15 to 94; sequence ENPGVYLMKN…IKRHRPYFNV (80 aa). A UVR domain is found at 204 to 239; that stretch reads DQVLKLLIRLMNEASARLDYETAALRRDQIASIKEV.

It belongs to the UvrC family. As to quaternary structure, interacts with UvrB in an incision complex.

Its subcellular location is the cytoplasm. In terms of biological role, the UvrABC repair system catalyzes the recognition and processing of DNA lesions. UvrC both incises the 5' and 3' sides of the lesion. The N-terminal half is responsible for the 3' incision and the C-terminal half is responsible for the 5' incision. The polypeptide is UvrABC system protein C (Dehalococcoides mccartyi (strain ATCC BAA-2100 / JCM 16839 / KCTC 5957 / BAV1)).